We begin with the raw amino-acid sequence, 273 residues long: tRNA pseudouridine synthase A (273 aa).

The active-site Nucleophile is D52. Y110 contacts substrate.

Belongs to the tRNA pseudouridine synthase TruA family. Homodimer.

The catalysed reaction is uridine(38/39/40) in tRNA = pseudouridine(38/39/40) in tRNA. Its function is as follows. Formation of pseudouridine at positions 38, 39 and 40 in the anticodon stem and loop of transfer RNAs. This Cupriavidus pinatubonensis (strain JMP 134 / LMG 1197) (Cupriavidus necator (strain JMP 134)) protein is tRNA pseudouridine synthase A.